The following is a 291-amino-acid chain: 2-C-methyl-D-erythritol 4-phosphate cytidylyltransferase (291 aa).

The tract at residues M1–A23 is disordered.

This sequence belongs to the IspD/TarI cytidylyltransferase family. IspD subfamily.

The catalysed reaction is 2-C-methyl-D-erythritol 4-phosphate + CTP + H(+) = 4-CDP-2-C-methyl-D-erythritol + diphosphate. Its pathway is isoprenoid biosynthesis; isopentenyl diphosphate biosynthesis via DXP pathway; isopentenyl diphosphate from 1-deoxy-D-xylulose 5-phosphate: step 2/6. Catalyzes the formation of 4-diphosphocytidyl-2-C-methyl-D-erythritol from CTP and 2-C-methyl-D-erythritol 4-phosphate (MEP). In Bifidobacterium longum (strain NCC 2705), this protein is 2-C-methyl-D-erythritol 4-phosphate cytidylyltransferase.